A 654-amino-acid polypeptide reads, in one-letter code: Probable protein phosphatase 2C 23 (654 aa).

The tract at residues 11–30 is disordered; it reads CLTGGAGRNKKPELSILEPD. Ser-147 bears the Phosphoserine mark. A PPM-type phosphatase domain is found at 243-645; that stretch reads DVSLESQNLQ…DDVSIVVISL (403 aa). Residues Asp-280 and Gly-281 each coordinate Mn(2+). Residues 309-336 form a disordered region; sequence DDPKTDAKSSDEADVENRDSSSEKKSKN. Mn(2+) is bound by residues Asp-573 and Asp-636.

It belongs to the PP2C family. Mg(2+) is required as a cofactor. It depends on Mn(2+) as a cofactor. Expressed in seedlings, roots, leaves, stems, young inflorescences, flowers and siliques.

It is found in the nucleus. The enzyme catalyses O-phospho-L-seryl-[protein] + H2O = L-seryl-[protein] + phosphate. The catalysed reaction is O-phospho-L-threonyl-[protein] + H2O = L-threonyl-[protein] + phosphate. Functionally, involved in leaf development regulation. This Arabidopsis thaliana (Mouse-ear cress) protein is Probable protein phosphatase 2C 23 (PLL4).